The following is a 1488-amino-acid chain: Chromosome partition protein MukB (1488 aa).

Residue 34–41 (GGNGAGKS) coordinates ATP. 3 coiled-coil regions span residues 326–418 (LEAD…QYNQ), 444–472 (LDTFQAKEQEATEKLLSLEQKMSVAQTAH), and 509–602 (RHLA…QRAP). The flexible hinge stretch occupies residues 666–783 (PGGAEDQRLN…SLPIFGRAAR (118 aa)). Coiled-coil stretches lie at residues 835-923 (EAEI…AKLE), 977-1116 (EMLS…AKAG), and 1209-1265 (VEAI…LQSV).

It belongs to the SMC family. MukB subfamily. As to quaternary structure, homodimerization via its hinge domain. Binds to DNA via its C-terminal region. Interacts, and probably forms a ternary complex, with MukE and MukF via its C-terminal region. The complex formation is stimulated by calcium or magnesium. Interacts with tubulin-related protein FtsZ.

Its subcellular location is the cytoplasm. It is found in the nucleoid. Functionally, plays a central role in chromosome condensation, segregation and cell cycle progression. Functions as a homodimer, which is essential for chromosome partition. Involved in negative DNA supercoiling in vivo, and by this means organize and compact chromosomes. May achieve or facilitate chromosome segregation by condensation DNA from both sides of a centrally located replisome during cell division. The chain is Chromosome partition protein MukB from Salmonella paratyphi B (strain ATCC BAA-1250 / SPB7).